A 408-amino-acid polypeptide reads, in one-letter code: Imidazolonepropionase (408 aa).

His73 and His75 together coordinate Fe(3+). Zn(2+)-binding residues include His73 and His75. 3 residues coordinate 4-imidazolone-5-propanoate: Arg82, Tyr145, and His178. Position 145 (Tyr145) interacts with N-formimidoyl-L-glutamate. Fe(3+) is bound at residue His243. His243 is a Zn(2+) binding site. Gln246 provides a ligand contact to 4-imidazolone-5-propanoate. Asp318 is a binding site for Fe(3+). Asp318 serves as a coordination point for Zn(2+). 2 residues coordinate N-formimidoyl-L-glutamate: Asn320 and Gly322. Ser323 contacts 4-imidazolone-5-propanoate.

Belongs to the metallo-dependent hydrolases superfamily. HutI family. Zn(2+) serves as cofactor. The cofactor is Fe(3+).

The protein resides in the cytoplasm. It carries out the reaction 4-imidazolone-5-propanoate + H2O = N-formimidoyl-L-glutamate. Its pathway is amino-acid degradation; L-histidine degradation into L-glutamate; N-formimidoyl-L-glutamate from L-histidine: step 3/3. In terms of biological role, catalyzes the hydrolytic cleavage of the carbon-nitrogen bond in imidazolone-5-propanoate to yield N-formimidoyl-L-glutamate. It is the third step in the universal histidine degradation pathway. The sequence is that of Imidazolonepropionase from Shewanella baltica (strain OS195).